The sequence spans 230 residues: Small ribosomal subunit protein uS3c (230 aa).

In terms of domain architecture, KH type-2 spans 39-109 (IRSFIHGKLS…QIRVNVVEIS (71 aa)).

This sequence belongs to the universal ribosomal protein uS3 family. Part of the 30S ribosomal subunit.

It is found in the plastid. It localises to the chloroplast. The sequence is that of Small ribosomal subunit protein uS3c (rps3) from Porphyra purpurea (Red seaweed).